The following is a 373-amino-acid chain: MTAQNPNLAALSAAGVSVWLDDLSRDRLRSGNLQELIDTKSVVGVTTNPSIFQKALSEGHTYDAQIAELAARGADVDATIRTVTTDDVRSACDVLVPQWEDSDGVDGRVSIEVDPRLAHETEKTIQQAIELWKIVDRPNLFIKIPATKAGLPAISAVLAEGISVNVTLIFSVQRYREVMDAYLTGMEKARQAGHSLSKIHSVASFFVSRVDTEIDKRLDRIGSRQALELRGQAGVANARLAYATYREVFEDSDRYRSLKVDGARVQRPLWASTGVKNPDYSDTLYVTELVAPHTVNTMPEKTIDAVADHGVIQGDTVTGTASDAQAVFDQLGAIGIDLTDVFAVLEEEGVRKFEASWNELLQETRAHLDTAAQ.

Catalysis depends on Lys-143, which acts as the Schiff-base intermediate with substrate.

This sequence belongs to the transaldolase family. Type 2 subfamily.

The protein resides in the cytoplasm. It carries out the reaction D-sedoheptulose 7-phosphate + D-glyceraldehyde 3-phosphate = D-erythrose 4-phosphate + beta-D-fructose 6-phosphate. It participates in carbohydrate degradation; pentose phosphate pathway; D-glyceraldehyde 3-phosphate and beta-D-fructose 6-phosphate from D-ribose 5-phosphate and D-xylulose 5-phosphate (non-oxidative stage): step 2/3. Functionally, transaldolase is important for the balance of metabolites in the pentose-phosphate pathway. This chain is Transaldolase (tal), found in Mycobacterium tuberculosis (strain ATCC 25618 / H37Rv).